A 693-amino-acid polypeptide reads, in one-letter code: Golgin subfamily A member 6C (693 aa).

Disordered regions lie at residues 20–71 (NKLA…DSQY), 497–547 (LPGE…GTEQ), and 629–693 (NPAD…MQDT). The stretch at 73 to 611 (ELAVALESSS…KLLELQELVL (539 aa)) forms a coiled coil. The segment covering 537 to 547 (LPKEKADGTEQ) has biased composition (basic and acidic residues). Over residues 679–693 (PVQQIVQLSPVMQDT) the composition is skewed to polar residues.

Belongs to the GOLGA6 family.

This Homo sapiens (Human) protein is Golgin subfamily A member 6C (GOLGA6C).